The primary structure comprises 124 residues: uncharacterized protein (124 aa).

This is an uncharacterized protein from Magallana gigas (Pacific oyster).